We begin with the raw amino-acid sequence, 603 residues long: Probable potassium transport system protein Kup (603 aa).

Transmembrane regions (helical) follow at residues 15–35 (GLVFGDIGTSPIYTLTVIFLL), 43–63 (IIGVLSLIIWTLIILVTVEYA), 94–114 (VAFVTLLAYIGTSFLMGDGVI), 135–155 (NIGQSTIILISAAIAIALFSV), 163–183 (ITWVFGPIMVLWFATIGFSGI), 209–229 (GIIGFFVLSEVILCATGGEAL), 244–264 (AWRFVFLALVLNYLGQGAFLI), 283–303 (ILYIPFLLLSVVATIIASQAM), 336–356 (IYISTVNWLLLVSVLFMMLIF), 365–385 (AYGLAVTGTMSITGIMMTSIF), 390–410 (NITKALISLFITFIDVVFLLS), and 415–435 (IPHGGYWSVIIALFILSLILI).

Belongs to the HAK/KUP transporter (TC 2.A.72) family.

The protein localises to the cell membrane. It catalyses the reaction K(+)(in) + H(+)(in) = K(+)(out) + H(+)(out). Functionally, transport of potassium into the cell. Likely operates as a K(+):H(+) symporter. The polypeptide is Probable potassium transport system protein Kup (Methanosarcina barkeri (strain Fusaro / DSM 804)).